Consider the following 351-residue polypeptide: MSGARPLTVVVVDDSLTTRALIAAALRRDPRVKIVGTAGTPFEARDLIVRLNPDVLTLDFEMPSMNGLQFLEKIMRLRPMPVVMVSGHLSSHRGLVEQSLRMGAAEWYSKTTTANGEDPFAGLGDAIVRAAAMKQQAPVPVATDSANRTVPKIGTVVGIGASTGGVEALTDVLGHFPVACPPTVIVQHMPRQFSESFARRLDRIVKPEVRLAEEGDMLKPGTVYVASGGERHLRVRCGARSGEYVCQLVAAPPVNGHRPSVDELFYSLATTVGKNAVGVILTGMECDGAQGLLAMRHAGASTIGQDRASSVIYGMPRAAYELGAVETQLPLSAIGPAILNLCERRSLETYP.

One can recognise a Response regulatory domain in the interval 8 to 125 (TVVVVDDSLT…GEDPFAGLGD (118 aa)). D59 is modified (4-aspartylphosphate). A CheB-type methylesterase domain is found at 151-345 (PKIGTVVGIG…PAILNLCERR (195 aa)). Active-site residues include S162, H188, and D287.

It belongs to the CheB family. Post-translationally, phosphorylated by CheA. Phosphorylation of the N-terminal regulatory domain activates the methylesterase activity.

The protein localises to the cytoplasm. The catalysed reaction is [protein]-L-glutamate 5-O-methyl ester + H2O = L-glutamyl-[protein] + methanol + H(+). It carries out the reaction L-glutaminyl-[protein] + H2O = L-glutamyl-[protein] + NH4(+). Functionally, involved in chemotaxis. Part of a chemotaxis signal transduction system that modulates chemotaxis in response to various stimuli. Catalyzes the demethylation of specific methylglutamate residues introduced into the chemoreceptors (methyl-accepting chemotaxis proteins or MCP) by CheR. Also mediates the irreversible deamidation of specific glutamine residues to glutamic acid. The protein is Protein-glutamate methylesterase/protein-glutamine glutaminase of Gluconobacter oxydans (strain 621H) (Gluconobacter suboxydans).